We begin with the raw amino-acid sequence, 192 residues long: Casparian strip membrane protein 2 (192 aa).

At 1 to 31 (MTKDVVVEHGESSKAPLVAAPAASGVGRAAS) the chain is on the cytoplasmic side. The helical transmembrane segment at 32-52 (VADVFLRFLAIVGTIASAISM) threads the bilayer. Residues 53–79 (GTTNETLPFFTQFIQFEAKYSDLPSFT) are Extracellular-facing. The N-linked (GlcNAc...) asparagine glycan is linked to Asn-56. The chain crosses the membrane as a helical span at residues 80–100 (FFVAANAVVCTYLVLSIPLSI). Residues 101–112 (VHIVRPRARYSR) lie on the Cytoplasmic side of the membrane. Residues 113-133 (LVLVFFDAAMLTLLTAGASAA) form a helical membrane-spanning segment. Residues 134–166 (AAIVYLAHKGNVRANWFAICQQFDSFCERISGS) are Extracellular-facing. The helical transmembrane segment at 167–187 (LIGSFAAMVLLIMLIFLSAFA) threads the bilayer. Topologically, residues 188–192 (LARRH) are cytoplasmic.

It belongs to the Casparian strip membrane proteins (CASP) family. As to quaternary structure, homodimer and heterodimers.

It is found in the cell membrane. Functionally, regulates membrane-cell wall junctions and localized cell wall deposition. Required for establishment of the Casparian strip membrane domain (CSD) and the subsequent formation of Casparian strips, a cell wall modification of the root endodermis that determines an apoplastic barrier between the intraorganismal apoplasm and the extraorganismal apoplasm and prevents lateral diffusion. This chain is Casparian strip membrane protein 2, found in Panicum virgatum (Blackwell switchgrass).